The sequence spans 551 residues: E3 ubiquitin-protein ligase TRIM8 (551 aa).

The RING-type zinc finger occupies 15–56; that stretch reads CPICLHVFVEPVQLPCKHNFCRGCIGEAWAKDSGLVRCPECN. 2 B box-type zinc fingers span residues 92-132 and 140-182; these read CVFC…ARGH and VRAW…VCDV. Coiled-coil stretches lie at residues 181-249 and 274-295; these read DVEI…DLRQ and ERMQ…KTED. The segment at 399 to 457 is disordered; the sequence is QYGAAGTASSEGQSGQPLGPCSSTQHLVALPGGTQPVHSSPVFPPSQYPNGSTTQQPML. Composition is skewed to polar residues over residues 405–424 and 446–456; these read TASS…STQH and YPNGSTTQQPM.

Belongs to the TRIM/RBCC family. In terms of assembly, homodimer. Interacts with SOCS1 (via) SH2 domain and SOCS box. Interacts with HSP90AB1; prevents nucleus translocation of phosphorylated STAT3 and HSP90AB1. Interacts with MAP3K7/TAK1. Interacts with PIAS3. Interacts with TICAM1. Interacts with TRIM15; this interaction prevents TRIM8 cytoplasmic translocation. In terms of tissue distribution, high expression in heart, liver, and thymus. Expressed in embryonic CNS, kidney, lens and gut.

It carries out the reaction S-ubiquitinyl-[E2 ubiquitin-conjugating enzyme]-L-cysteine + [acceptor protein]-L-lysine = [E2 ubiquitin-conjugating enzyme]-L-cysteine + N(6)-ubiquitinyl-[acceptor protein]-L-lysine.. The protein operates within protein modification; protein ubiquitination. Its function is as follows. E3 ubiquitin-protein ligase that participates in multiple biological processes including cell survival, differentiation, apoptosis, and in particular, the innate immune response. Participates in the activation of interferon-gamma signaling by promoting proteasomal degradation of the repressor SOCS1. Plays a positive role in the TNFalpha and IL-1beta signaling pathways. Mechanistically, induces the 'Lys-63'-linked polyubiquitination of MAP3K7/TAK1 component leading to the activation of NF-kappa-B. Also modulates STAT3 activity through negative regulation of PIAS3, either by degradation of PIAS3 through the ubiquitin-proteasome pathway or exclusion of PIAS3 from the nucleus. Negatively regulates TLR3/4-mediated innate immune response by catalyzing 'Lys-6'- and 'Lys-33'-linked polyubiquitination of TICAM1 and thereby disrupting the TICAM1-TBK1 interaction. The polypeptide is E3 ubiquitin-protein ligase TRIM8 (Trim8) (Mus musculus (Mouse)).